A 257-amino-acid chain; its full sequence is Snake venom serine protease KN1 (257 aa).

Positions 1 to 18 (MVLIRVLANLLILQLSYA) are cleaved as a signal peptide. Residues 19 to 24 (QKSSEL) constitute a propeptide that is removed on maturation. The 224-residue stretch at 25-248 (VVGGHPCNIN…HLDWIKSIIA (224 aa)) folds into the Peptidase S1 domain. Cystine bridges form between Cys-31/Cys-162, Cys-49/Cys-65, Cys-141/Cys-209, Cys-173/Cys-188, and Cys-199/Cys-224. His-64 serves as the catalytic Charge relay system. Asn-102 is a glycosylation site (N-linked (GlcNAc...) asparagine). The active-site Charge relay system is Asp-109. Residues Asn-120 and Asn-121 are each glycosylated (N-linked (GlcNAc...) asparagine). The active-site Charge relay system is the Ser-203.

This sequence belongs to the peptidase S1 family. Snake venom subfamily. As to quaternary structure, monomer. As to expression, expressed by the venom gland.

It is found in the secreted. In terms of biological role, snake venom serine protease that may act in the hemostasis system of the prey. This Trimeresurus stejnegeri (Chinese green tree viper) protein is Snake venom serine protease KN1.